Here is a 690-residue protein sequence, read N- to C-terminus: Protein arginine N-methyltransferase 7 (690 aa).

SAM-dependent MTase PRMT-type domains lie at 14-357 (QNSW…YSLW) and 366-690 (TKSV…QKKL).

The protein belongs to the class I-like SAM-binding methyltransferase superfamily. Protein arginine N-methyltransferase family. PRMT7 subfamily.

In terms of biological role, essential arginine methyltransferase that can both catalyze the formation of omega-N monomethylarginine (MMA) and symmetrical dimethylarginine (sDMA). Specifically mediates the symmetrical dimethylation of arginine residues in the small nuclear ribonucleoproteins SmD1 and SmD3. The protein is Protein arginine N-methyltransferase 7 (Art7) of Drosophila erecta (Fruit fly).